We begin with the raw amino-acid sequence, 247 residues long: Peroxisomal membrane protein 11A (247 aa).

At 1–83 (MDAFTRFTNQ…SIHATDLVPR (83 aa)) the chain is on the cytoplasmic side. A helical transmembrane segment spans residues 84-105 (LCLTLANLNRVIYFICDTILWV). Over 106 to 219 (RSVGLTSGIN…DQLGIYKSNP (114 aa)) the chain is Lumenal. A helical transmembrane segment spans residues 220-239 (GIIGLGGLVSSIAGMITVAY). A required for homodimerization, interaction with PEX11G, and peroxisomal localization region spans residues 220–239 (GIIGLGGLVSSIAGMITVAY). Over 240–247 (PQMKLKTR) the chain is Cytoplasmic.

This sequence belongs to the peroxin-11 family. Homodimer. Heterodimer with PEX11G. Probably interacts with COPB2 and COPA. Interacts with PEX19. Interacts with FIS1. Seems not to be N-glycosylated.

The protein localises to the peroxisome membrane. In terms of biological role, may be involved in peroxisomal proliferation and may regulate peroxisomes division. May mediate binding of coatomer proteins to the peroxisomal membrane. Promotes membrane protrusion and elongation on the peroxisomal surface. The chain is Peroxisomal membrane protein 11A (PEX11A) from Homo sapiens (Human).